The primary structure comprises 328 residues: Methionyl-tRNA formyltransferase (328 aa).

110–113 lines the (6S)-5,6,7,8-tetrahydrofolate pocket; it reads SLLP.

It belongs to the Fmt family.

The enzyme catalyses L-methionyl-tRNA(fMet) + (6R)-10-formyltetrahydrofolate = N-formyl-L-methionyl-tRNA(fMet) + (6S)-5,6,7,8-tetrahydrofolate + H(+). In terms of biological role, attaches a formyl group to the free amino group of methionyl-tRNA(fMet). The formyl group appears to play a dual role in the initiator identity of N-formylmethionyl-tRNA by promoting its recognition by IF2 and preventing the misappropriation of this tRNA by the elongation apparatus. The polypeptide is Methionyl-tRNA formyltransferase (Prochlorococcus marinus (strain MIT 9312)).